The following is a 215-amino-acid chain: 3-demethoxyubiquinol 3-hydroxylase (215 aa).

The interval 26–47 (PSSAHSQRPSPAVVQPEHKMSE) is disordered. E64, E94, H97, E146, E178, and H181 together coordinate Fe cation.

It belongs to the COQ7 family. The cofactor is Fe cation.

Its subcellular location is the cell membrane. The catalysed reaction is a 5-methoxy-2-methyl-3-(all-trans-polyprenyl)benzene-1,4-diol + AH2 + O2 = a 3-demethylubiquinol + A + H2O. It functions in the pathway cofactor biosynthesis; ubiquinone biosynthesis. Functionally, catalyzes the hydroxylation of 2-nonaprenyl-3-methyl-6-methoxy-1,4-benzoquinol during ubiquinone biosynthesis. In Pseudomonas syringae pv. syringae (strain B728a), this protein is 3-demethoxyubiquinol 3-hydroxylase.